Reading from the N-terminus, the 360-residue chain is Acetylxylan esterase / glucomannan deacetylase (360 aa).

An N-terminal signal peptide occupies residues 1–21; it reads MKPHALIGLLAGMLLSSSLYA. Ser-151 functions as the Nucleophile in the catalytic mechanism.

This sequence belongs to the carbohydrate esterase 2 (CE2) family.

It is found in the secreted. It catalyses the reaction Deacetylation of xylans and xylo-oligosaccharides.. It participates in glycan degradation; xylan degradation. In terms of biological role, involved in the degradation of plant cell wall polysaccharides. Catalyzes the deacetylation of acetylated birchwood xylan and glucomannan, with a large preference for the latter, and of the synthetic substrate 4-nitrophenyl acetate (4-NPAc). This is Acetylxylan esterase / glucomannan deacetylase from Cellvibrio japonicus (strain Ueda107) (Pseudomonas fluorescens subsp. cellulosa).